The following is a 23-amino-acid chain: Nephrotoxin PsTX-115 (23 aa).

It localises to the secreted. The protein resides in the nematocyst. Functionally, nephrotoxin. When injected intravenously in rats, causes severe destructive glomerular changes. At 24 hours post-injection partial disruption of the glomerular basement membrane, massive thrombus formation in glomerular capillaries, severe mesangiolysis and infiltrating cells were observed in the majority of glomeruli. The sequence is that of Nephrotoxin PsTX-115 from Phyllodiscus semoni (Night anemone).